We begin with the raw amino-acid sequence, 710 residues long: Polyribonucleotide nucleotidyltransferase (710 aa).

The Mg(2+) site is built by Asp489 and Asp495. The 60-residue stretch at 556 to 615 (PKIDTIKIDVDKIKVVIGKGGETIDKIIAETGVKIDIDDEGNVSIYSSDQAAINRTKEII) folds into the KH domain. The S1 motif domain occupies 625 to 693 (GEVYHAKVVR…EKGRVDASMK (69 aa)). The interval 691-710 (SMKALIPRPPKPEKKEEKHD) is disordered. A compositionally biased stretch (basic and acidic residues) spans 700–710 (PKPEKKEEKHD).

The cofactor is Mg(2+).

Its subcellular location is the cytoplasm. The catalysed reaction is RNA(n+1) + phosphate = RNA(n) + a ribonucleoside 5'-diphosphate. Functionally, involved in mRNA degradation. Catalyzes the phosphorolysis of single-stranded polyribonucleotides processively in the 3'- to 5'-direction. This Streptococcus pyogenes serotype M6 (strain ATCC BAA-946 / MGAS10394) protein is Polyribonucleotide nucleotidyltransferase.